The chain runs to 623 residues: Probable lysophospholipase 5 (623 aa).

A signal peptide spans 1-19 (MKLSSFGLFLALQLLPALG). Positions 67 to 607 (ACPSGSLLRP…NQYCWNGTIA (541 aa)) constitute a PLA2c domain. N-linked (GlcNAc...) asparagine glycosylation is found at Asn-118, Asn-153, Asn-187, Asn-232, Asn-256, Asn-264, Asn-293, Asn-331, Asn-360, Asn-367, Asn-400, Asn-403, Asn-474, Asn-508, Asn-513, Asn-537, Asn-564, Asn-586, and Asn-603.

This sequence belongs to the lysophospholipase family.

The protein localises to the secreted. It catalyses the reaction a 1-acyl-sn-glycero-3-phosphocholine + H2O = sn-glycerol 3-phosphocholine + a fatty acid + H(+). Catalyzes the release of fatty acids from lysophospholipids. The protein is Probable lysophospholipase 5 (plb5) of Schizosaccharomyces pombe (strain 972 / ATCC 24843) (Fission yeast).